We begin with the raw amino-acid sequence, 277 residues long: Small ribosomal subunit protein uS2 (277 aa).

The tract at residues 1–78 (MSENDEGTDA…PADEEPVLDE (78 aa)) is disordered.

Belongs to the universal ribosomal protein uS2 family.

In Natronomonas pharaonis (strain ATCC 35678 / DSM 2160 / CIP 103997 / JCM 8858 / NBRC 14720 / NCIMB 2260 / Gabara) (Halobacterium pharaonis), this protein is Small ribosomal subunit protein uS2.